Reading from the N-terminus, the 278-residue chain is Potassium/proton antiporter CemA (278 aa).

A run of 4 helical transmembrane segments spans residues 61-81 (ILLLFISPVLVNQASKFFVFG), 155-175 (AVKNILSDLVSILVFILLMIT), 203-223 (IILFTDMFVGFHSPHGWEVII), and 238-258 (FIFLFISTFPVILDTIFKYWI).

The protein belongs to the CemA family.

It is found in the plastid. The protein resides in the chloroplast inner membrane. It carries out the reaction K(+)(in) + H(+)(out) = K(+)(out) + H(+)(in). In terms of biological role, contributes to K(+)/H(+) antiport activity by supporting proton efflux to control proton extrusion and homeostasis in chloroplasts in a light-dependent manner to modulate photosynthesis. Prevents excessive induction of non-photochemical quenching (NPQ) under continuous-light conditions. Indirectly promotes efficient inorganic carbon uptake into chloroplasts. This Pyropia yezoensis (Susabi-nori) protein is Potassium/proton antiporter CemA.